The primary structure comprises 279 residues: Large ribosomal subunit protein uL2 (279 aa).

Disordered stretches follow at residues 1 to 28 (MPARRYKPTSPGRRNSSVLTRDSVTKEK) and 221 to 279 (RGTV…GRRR). A compositionally biased stretch (polar residues) spans 12-22 (GRRNSSVLTRD).

This sequence belongs to the universal ribosomal protein uL2 family. Part of the 50S ribosomal subunit. Forms a bridge to the 30S subunit in the 70S ribosome.

In terms of biological role, one of the primary rRNA binding proteins. Required for association of the 30S and 50S subunits to form the 70S ribosome, for tRNA binding and peptide bond formation. It has been suggested to have peptidyltransferase activity; this is somewhat controversial. Makes several contacts with the 16S rRNA in the 70S ribosome. This is Large ribosomal subunit protein uL2 from Rubrobacter xylanophilus (strain DSM 9941 / JCM 11954 / NBRC 16129 / PRD-1).